Reading from the N-terminus, the 109-residue chain is uncharacterized protein (109 aa).

A helical transmembrane segment spans residues 75–95 (LHFFFLFWLLNFILFFRIHLY).

The protein localises to the membrane. This is an uncharacterized protein from Schizosaccharomyces pombe (strain 972 / ATCC 24843) (Fission yeast).